A 218-amino-acid polypeptide reads, in one-letter code: Claudin-3 (218 aa).

Topologically, residues 1–8 (MSMGLEIA) are cytoplasmic. The helical transmembrane segment at 9-29 (GTSLAVLGWLSTIVCCALPMW) threads the bilayer. The Extracellular segment spans residues 30–80 (RVTAFIGSSIITAQITWEGLWMNCVVQSTGQMQCKVYDSLLALPQDLQAAR). Residues 81–101 (ALIVVSILLAAFGLLVALVGA) traverse the membrane as a helical segment. Over 102–115 (QCTNCVQDDTAKAK) the chain is Cytoplasmic. Residues 116–136 (ITIVAGVLFLLAALLTLVPVS) form a helical membrane-spanning segment. Residues 137 to 159 (WSANTIIRDFYNPLVPDAQKREM) are Extracellular-facing. Residues 160–180 (GAGLYVGWAAAALQLLGGALL) traverse the membrane as a helical segment. At 181–218 (CCSCPPRDKKYAPTKIVYSAPRSAGPGTSTAYDRKDYV) the chain is on the cytoplasmic side. At Tyr-198 the chain carries Phosphotyrosine. Ser-199 and Ser-209 each carry phosphoserine. The tract at residues 217–218 (YV) is interactions with TJP1, TJP2 and TJP3.

It belongs to the claudin family. Can form homo- and heteropolymers with other CLDN. Homopolymers interact with CLDN1 and CLDN2 homopolymers. Interacts in cis (within the same plasma membrane) with CLDN19. Directly interacts with TJP1/ZO-1, TJP2/ZO-2 and TJP3/ZO-3.

It localises to the cell junction. Its subcellular location is the tight junction. It is found in the cell membrane. Its function is as follows. Plays a major role in tight junction-specific obliteration of the intercellular space, through calcium-independent cell-adhesion activity. This chain is Claudin-3 (CLDN3), found in Canis lupus familiaris (Dog).